A 316-amino-acid polypeptide reads, in one-letter code: Pantothenate kinase (316 aa).

95–102 (GSVAVGKS) contributes to the ATP binding site.

The protein belongs to the prokaryotic pantothenate kinase family.

The protein resides in the cytoplasm. It catalyses the reaction (R)-pantothenate + ATP = (R)-4'-phosphopantothenate + ADP + H(+). Its pathway is cofactor biosynthesis; coenzyme A biosynthesis; CoA from (R)-pantothenate: step 1/5. This is Pantothenate kinase from Hamiltonella defensa subsp. Acyrthosiphon pisum (strain 5AT).